Here is a 341-residue protein sequence, read N- to C-terminus: Fructose-1,6-bisphosphatase class 1 1 (341 aa).

The Mg(2+) site is built by Glu-92, Asp-114, Leu-116, and Asp-117. Residues Asp-117 to Ser-120, Asn-209, and Lys-275 each bind substrate. Glu-281 lines the Mg(2+) pocket.

It belongs to the FBPase class 1 family. Homotetramer. Mg(2+) is required as a cofactor.

It is found in the cytoplasm. It catalyses the reaction beta-D-fructose 1,6-bisphosphate + H2O = beta-D-fructose 6-phosphate + phosphate. It participates in carbohydrate biosynthesis; gluconeogenesis. The chain is Fructose-1,6-bisphosphatase class 1 1 from Leptothrix cholodnii (strain ATCC 51168 / LMG 8142 / SP-6) (Leptothrix discophora (strain SP-6)).